Here is a 252-residue protein sequence, read N- to C-terminus: Membrane protein insertase YidC (252 aa).

Positions M1 to G19 are cleaved as a signal peptide. C20 carries the N-palmitoyl cysteine lipid modification. C20 carries the S-diacylglycerol cysteine lipid modification. 6 consecutive transmembrane segments (helical) span residues I34–L54, F58–I78, M131–I151, F162–I182, V201–L221, and L223–F243.

It belongs to the OXA1/ALB3/YidC family. Type 2 subfamily.

It localises to the cell membrane. In terms of biological role, required for the insertion and/or proper folding and/or complex formation of integral membrane proteins into the membrane. Involved in integration of membrane proteins that insert both dependently and independently of the Sec translocase complex, as well as at least some lipoproteins. In Alkalihalophilus pseudofirmus (strain ATCC BAA-2126 / JCM 17055 / OF4) (Bacillus pseudofirmus), this protein is Membrane protein insertase YidC.